Reading from the N-terminus, the 389-residue chain is Glutaryl-CoA dehydrogenase (389 aa).

Residues R87 and N91 each contribute to the substrate site. FAD-binding positions include 126 to 129 (FGIT), S135, and 159 to 161 (WIS). S135 provides a ligand contact to substrate. Residue S181 participates in substrate binding. Residues R271, 281–284 (FQMN), R340, A344, and 367–371 (EGSAN) contribute to the FAD site. E367 acts as the Proton acceptor in catalysis. R385 contributes to the substrate binding site.

The protein belongs to the acyl-CoA dehydrogenase family. In terms of assembly, homotetramer. FAD is required as a cofactor.

The catalysed reaction is glutaryl-CoA + A = (2E)-glutaconyl-CoA + AH2. It functions in the pathway aromatic compound metabolism; benzoyl-CoA degradation. With respect to regulation, inhibited by glutaconyl-CoA. Its function is as follows. Catalyzes the dehydrogenation of Glutaryl-CoA to glutaconyl-CoA. This Desulfococcus multivorans protein is Glutaryl-CoA dehydrogenase (Acd).